We begin with the raw amino-acid sequence, 372 residues long: NAD(P)H-quinone oxidoreductase subunit 1 (372 aa).

The next 8 helical transmembrane spans lie at 27-47 (IIWLPLPMLLVLVAAVVGVLV), 97-117 (ILFTAGPILVLVPVILSWLIV), 128-148 (VGIGIFLWIALSSIQPIGLLM), 176-196 (LALSVLAIVLMTNSLSTIDIV), 204-224 (ILSWNIWRQPVGFIVFWICAL), 266-286 (ILSALLVSILYLGGWGFPIPV), 308-328 (SIGIVMTVLKAYLLVFIAILL), and 347-367 (FLLPISLANLLITAGLKLAFP).

This sequence belongs to the complex I subunit 1 family. NDH-1 is composed of at least 11 different subunits.

It localises to the cellular thylakoid membrane. It carries out the reaction a plastoquinone + NADH + (n+1) H(+)(in) = a plastoquinol + NAD(+) + n H(+)(out). It catalyses the reaction a plastoquinone + NADPH + (n+1) H(+)(in) = a plastoquinol + NADP(+) + n H(+)(out). Its function is as follows. NDH-1 shuttles electrons from an unknown electron donor, via FMN and iron-sulfur (Fe-S) centers, to quinones in the respiratory and/or the photosynthetic chain. The immediate electron acceptor for the enzyme in this species is believed to be plastoquinone. Couples the redox reaction to proton translocation, and thus conserves the redox energy in a proton gradient. The polypeptide is NAD(P)H-quinone oxidoreductase subunit 1 (Prochlorococcus marinus (strain MIT 9215)).